We begin with the raw amino-acid sequence, 61 residues long: Alpha-conotoxin PnIB (61 aa).

An N-terminal signal peptide occupies residues 1–21 (MGMRMMFTVFLLVVLATTVVS). Residues 22-44 (FTSDRASDDGNAAASDLIALTIK) constitute a propeptide that is removed on maturation. Disulfide bonds link cysteine 46/cysteine 52 and cysteine 47/cysteine 60. The tract at residues 48–50 (SLP) is ser-Xaa-Pro motif, crucial for potent interaction with nAChR. Tyrosine 59 carries the sulfotyrosine modification. Cysteine 60 bears the Cysteine amide mark.

It belongs to the conotoxin A superfamily. In terms of tissue distribution, expressed by the venom duct.

The protein resides in the secreted. Its function is as follows. Alpha-conotoxins act on postsynaptic membranes, they bind to the nicotinic acetylcholine receptors (nAChR) and thus inhibit them. This toxin blocks mammalian nAChRs (alpha-7/CHRNA7 &gt; alpha-3-beta-2/CHRNA3-CHRNB2). This Conus pennaceus (Feathered cone) protein is Alpha-conotoxin PnIB.